The sequence spans 208 residues: MQFSVGNIYQPSECHTCMDDQTFISTIKTGDKKKIEEMADDLWNYRDLYQRNALMISAMYGRTDLIEFFAARYDHIDDRDIEGNTALMWAVRNNRMESAKSLIALKCSIDIPDSAGNTPICWAVIFGYTDMVKLLISSGANINISNDEGDTPAILASKYGRSECLKMLIEAGCDLNAKNHNAQNVWKAAEAFGRKEILEVLASLSNGR.

4 ANK repeats span residues 49–78 (YQRN…HIDD), 82–111 (EGNT…SIDI), 115–144 (AGNT…NINI), and 148–177 (EGDT…DLNA).

This chain is Putative ankyrin repeat protein Ta0196, found in Thermoplasma acidophilum (strain ATCC 25905 / DSM 1728 / JCM 9062 / NBRC 15155 / AMRC-C165).